The primary structure comprises 251 residues: Probable transcriptional regulatory protein Blon_1155/BLIJ_1182 (251 aa).

Belongs to the TACO1 family.

It is found in the cytoplasm. The polypeptide is Probable transcriptional regulatory protein Blon_1155/BLIJ_1182 (Bifidobacterium longum subsp. infantis (strain ATCC 15697 / DSM 20088 / JCM 1222 / NCTC 11817 / S12)).